Here is a 236-residue protein sequence, read N- to C-terminus: Three prime repair exonuclease 2 (236 aa).

2 residues coordinate Mg(2+): aspartate 14 and glutamate 16. Substrate contacts are provided by residues 16-17 and tyrosine 122; that span reads EA. Residue histidine 188 is the Proton donor/acceptor of the active site. Residue aspartate 193 participates in Mg(2+) binding. Aspartate 193 provides a ligand contact to substrate.

This sequence belongs to the exonuclease superfamily. TREX family. In terms of assembly, homodimer. It depends on Mg(2+) as a cofactor.

The protein localises to the nucleus. The catalysed reaction is Exonucleolytic cleavage in the 3'- to 5'-direction to yield nucleoside 5'-phosphates.. In terms of biological role, exonuclease with a preference for double-stranded DNA with mismatched 3' termini. May play a role in DNA repair. This chain is Three prime repair exonuclease 2 (Trex2), found in Mus musculus (Mouse).